A 318-amino-acid chain; its full sequence is Putative fimbrium tip subunit Fim1F (318 aa).

The first 24 residues, 1-24 (MRFNVVLFMLIVALLGGLSTCSSE), serve as a signal peptide directing secretion. The propeptide occupies 25-50 (VPIGFDTDELSFDMSLVLLTGDMQTK).

Belongs to the bacteroidetes fimbrillin superfamily. FimA/Mfa1 family. In terms of assembly, may be part of the fimbrial tip.

Its subcellular location is the fimbrium. In terms of biological role, putative component of the fimbrium tip. Fimbriae are filamentous appendages on the cell surface that mediate cell adhesion and biofilm formation. This is Putative fimbrium tip subunit Fim1F from Parabacteroides distasonis (strain ATCC 8503 / DSM 20701 / CIP 104284 / JCM 5825 / NCTC 11152).